A 353-amino-acid chain; its full sequence is Serine/threonine-protein kinase SRK2G (353 aa).

The Protein kinase domain occupies 4-260 (YDVVKDLGAG…LKEIKNHPWY (257 aa)). Residues 10-18 (LGAGNFGVA) and K33 contribute to the ATP site. D123 functions as the Proton acceptor in the catalytic mechanism. Positions 299 to 353 (RNPAPSTSAVKSSGSGADEEEEEDVEAEVEEEEDDEDEYEKHVKEAQSCQESDKA) are disordered. The span at 302 to 313 (APSTSAVKSSGS) shows a compositional bias: polar residues. Acidic residues predominate over residues 315 to 336 (ADEEEEEDVEAEVEEEEDDEDE). Residues 337–353 (YEKHVKEAQSCQESDKA) show a composition bias toward basic and acidic residues.

It belongs to the protein kinase superfamily. Ser/Thr protein kinase family. In terms of tissue distribution, expressed in seedlings.

Its subcellular location is the nucleus. It carries out the reaction L-seryl-[protein] + ATP = O-phospho-L-seryl-[protein] + ADP + H(+). It catalyses the reaction L-threonyl-[protein] + ATP = O-phospho-L-threonyl-[protein] + ADP + H(+). The polypeptide is Serine/threonine-protein kinase SRK2G (SRK2G) (Arabidopsis thaliana (Mouse-ear cress)).